The sequence spans 732 residues: Elongation factor 2 (732 aa).

The 242-residue stretch at 19 to 260 (ERIRNMGIAA…MVVRHLPNPL (242 aa)) folds into the tr-type G domain. GTP-binding positions include 28–35 (AHIDHGKT), 94–98 (DTPGH), and 148–151 (NKVD). Residue His-597 is modified to Diphthamide.

This sequence belongs to the TRAFAC class translation factor GTPase superfamily. Classic translation factor GTPase family. EF-G/EF-2 subfamily.

Its subcellular location is the cytoplasm. In terms of biological role, catalyzes the GTP-dependent ribosomal translocation step during translation elongation. During this step, the ribosome changes from the pre-translocational (PRE) to the post-translocational (POST) state as the newly formed A-site-bound peptidyl-tRNA and P-site-bound deacylated tRNA move to the P and E sites, respectively. Catalyzes the coordinated movement of the two tRNA molecules, the mRNA and conformational changes in the ribosome. The protein is Elongation factor 2 of Thermococcus onnurineus (strain NA1).